Here is a 404-residue protein sequence, read N- to C-terminus: Synaptic vesicle membrane protein VAT-1 homolog (404 aa).

The disordered stretch occupies residues 1–55 (MSAEREATEAATVAAAAEARAETGAGEGAPSQPPTVEVASDPQPPPAPEASASAS). The residue at position 2 (S2) is an N-acetylserine. Phosphoserine is present on S2. Over residues 9–24 (EAATVAAAAEARAETG) the composition is skewed to low complexity. A phosphoserine mark is found at S31 and S40.

Belongs to the zinc-containing alcohol dehydrogenase family. Quinone oxidoreductase subfamily. In terms of assembly, interacts with MFN1 and MFN2. In terms of tissue distribution, ubiquitously expressed.

The protein localises to the cytoplasm. It localises to the mitochondrion outer membrane. Functionally, plays a part in calcium-regulated keratinocyte activation in epidermal repair mechanisms. Has no effect on cell proliferation. Possesses ATPase activity. May negatively regulate mitochondrial fusion. In Rattus norvegicus (Rat), this protein is Synaptic vesicle membrane protein VAT-1 homolog (Vat1).